The sequence spans 877 residues: Phosphoenolpyruvate carboxylase (877 aa).

Residues H138 and K544 contribute to the active site.

Belongs to the PEPCase type 1 family. It depends on Mg(2+) as a cofactor.

It carries out the reaction oxaloacetate + phosphate = phosphoenolpyruvate + hydrogencarbonate. Its function is as follows. Forms oxaloacetate, a four-carbon dicarboxylic acid source for the tricarboxylic acid cycle. This Vibrio vulnificus (strain CMCP6) protein is Phosphoenolpyruvate carboxylase.